Consider the following 563-residue polypeptide: Sulfite reductase [NADPH] hemoprotein beta-component (563 aa).

Positions 427, 433, 472, and 476 each coordinate [4Fe-4S] cluster. Cys-476 is a siroheme binding site.

This sequence belongs to the nitrite and sulfite reductase 4Fe-4S domain family. In terms of assembly, alpha(8)-beta(8). The alpha component is a flavoprotein, the beta component is a hemoprotein. The cofactor is siroheme. Requires [4Fe-4S] cluster as cofactor.

It carries out the reaction hydrogen sulfide + 3 NADP(+) + 3 H2O = sulfite + 3 NADPH + 4 H(+). The protein operates within sulfur metabolism; hydrogen sulfide biosynthesis; hydrogen sulfide from sulfite (NADPH route): step 1/1. In terms of biological role, component of the sulfite reductase complex that catalyzes the 6-electron reduction of sulfite to sulfide. This is one of several activities required for the biosynthesis of L-cysteine from sulfate. The polypeptide is Sulfite reductase [NADPH] hemoprotein beta-component (Acidithiobacillus ferrooxidans (strain ATCC 53993 / BNL-5-31) (Leptospirillum ferrooxidans (ATCC 53993))).